A 455-amino-acid polypeptide reads, in one-letter code: Retinoic acid receptor beta (455 aa).

The tract at residues 1-87 (MTTSSRTCPV…PLPPPRVYKP (87 aa)) is modulating. A disordered region spans residues 45 to 78 (QSHPPTSGCSTPSPASVETQSTSSEELVPSPPSP). Residues 47–66 (HPPTSGCSTPSPASVETQST) show a composition bias toward polar residues. NR C4-type zinc fingers lie at residues 88-108 (CFVC…CEGC) and 124-148 (CHRD…LQKC). Residues 88–153 (CFVCQDKSSG…RLQKCFEVGM (66 aa)) constitute a DNA-binding region (nuclear receptor). Residues 154–182 (SKESVRNDRNKKKKEPTKQESTENYEMTA) form a hinge region. In terms of domain architecture, NR LBD spans 183–417 (ELDDLTEKIR…PLIQEMLENS (235 aa)). Residues 416 to 455 (NSEGHEPLTPTSNGNTAEHSPSISPSSVDNSSVSQSPMVQ) form a disordered region. Polar residues predominate over residues 424-434 (TPTSNGNTAEH). The span at 435–455 (SPSISPSSVDNSSVSQSPMVQ) shows a compositional bias: low complexity.

It belongs to the nuclear hormone receptor family. NR1 subfamily. In terms of assembly, heterodimer; with a RXR molecule. Binds DNA preferentially as a RAR/RXR heterodimer. In terms of tissue distribution, both isoforms expressed in heart, lung, kidney, liver, brain, lung and testis. Isoform Beta-1 is highly expressed in testes and brain. Levels increase during testes maturation. Isoform beta-2 is predominant in heart, kidney and lung.

It is found in the nucleus. Receptor for retinoic acid. Retinoic acid receptors bind as heterodimers to their target response elements in response to their ligands, all-trans or 9-cis retinoic acid, and regulate gene expression in various biological processes. The RAR/RXR heterodimers bind to the retinoic acid response elements (RARE) composed of tandem 5'-AGGTCA-3' sites known as DR1-DR5. May be required for Sertoli cell differentiation and spermatogenesis. The polypeptide is Retinoic acid receptor beta (RARB) (Coturnix japonica (Japanese quail)).